A 567-amino-acid chain; its full sequence is Signal transducer and activator of transcription b (567 aa).

One can recognise an SH2 domain in the interval 449–548; it reads WYDGLVYGFC…LGGRNKPRIR (100 aa).

It belongs to the transcription factor STAT family. In terms of assembly, may interact with sodium-dependent transporter snf-12; the interaction is probably direct.

It localises to the cytoplasm. The protein localises to the nucleus. Its subcellular location is the vesicle. Its function is as follows. Carries out a dual function: signal transduction and activation of transcription. Required, in concert with transcription factor elt-3, for up-regulation of the vacuolar H(+)-ATPase and acceleration of lysosome maturation at molt. As part of the innate immune response to molting and injury of the adult epidermis, positively regulates the expression of epidermal antimicrobial peptides, such as nlp-29. Through positively modulating the expression of epidermal antimicrobial peptides, such as nlp-29, plays a role in resistance to fungal infection and in the response to physical wounding and phorbol ester PMA treatment. Functions cell autonomously in the epidermis, in concert with sodium-dependent transporter snf-12, probably acting at vesicular membranes, downstream of a p38 MAPK/pmk-1 pathway. The sequence is that of Signal transducer and activator of transcription b from Caenorhabditis elegans.